Reading from the N-terminus, the 69-residue chain is Large ribosomal subunit protein bL31 (69 aa).

It belongs to the bacterial ribosomal protein bL31 family. Type A subfamily. As to quaternary structure, part of the 50S ribosomal subunit.

Its function is as follows. Binds the 23S rRNA. This Mycoplasmopsis pulmonis (strain UAB CTIP) (Mycoplasma pulmonis) protein is Large ribosomal subunit protein bL31.